A 59-amino-acid chain; its full sequence is UPF0434 protein plu1633 (59 aa).

Belongs to the UPF0434 family.

The protein is UPF0434 protein plu1633 of Photorhabdus laumondii subsp. laumondii (strain DSM 15139 / CIP 105565 / TT01) (Photorhabdus luminescens subsp. laumondii).